Reading from the N-terminus, the 209-residue chain is Small ribosomal subunit protein uS3 (209 aa).

Residues 38–107 (IRKIIKNKYY…RVVINIEEIK (70 aa)) enclose the KH type-2 domain.

The protein belongs to the universal ribosomal protein uS3 family. In terms of assembly, part of the 30S ribosomal subunit. Forms a tight complex with proteins S10 and S14.

Binds the lower part of the 30S subunit head. Binds mRNA in the 70S ribosome, positioning it for translation. The chain is Small ribosomal subunit protein uS3 from Thermotoga maritima (strain ATCC 43589 / DSM 3109 / JCM 10099 / NBRC 100826 / MSB8).